The primary structure comprises 87 residues: Acylphosphatase (87 aa).

Positions 1-87 constitute an Acylphosphatase-like domain; the sequence is MAWVHGRVQG…EDYQDFRIRY (87 aa). Catalysis depends on residues R14 and N32.

Belongs to the acylphosphatase family.

It catalyses the reaction an acyl phosphate + H2O = a carboxylate + phosphate + H(+). The polypeptide is Acylphosphatase (acyP) (Cronobacter sakazakii (strain ATCC BAA-894) (Enterobacter sakazakii)).